The chain runs to 25 residues: Toxin LyeTx 1 (25 aa).

Leu25 is subject to Leucine amide.

In terms of tissue distribution, expressed by the venom gland.

It localises to the secreted. Has antimicrobial activity against Gram-positive bacterium S.aureus (MIC=3.79 uM), Gram-negative bacterium E.coli (MIC=7.81 uM) and yeasts C.krusei (MIC=26.3 uM) and C.neoformans (MIC=13.2 uM). Has hemolytic activity against rabbit erythrocytes. Forms pores in lipid bilayers in vitro; pore formation is reduced when cholesterol is present in the bilayers. This is Toxin LyeTx 1 from Lycosa erythrognatha (Wolf spider).